Here is a 93-residue protein sequence, read N- to C-terminus: Large ribosomal subunit protein uL23cz/uL23cy (93 aa).

This sequence belongs to the universal ribosomal protein uL23 family. As to quaternary structure, part of the 50S ribosomal subunit.

It localises to the plastid. The protein resides in the chloroplast. Binds to 23S rRNA. In Helianthus annuus (Common sunflower), this protein is Large ribosomal subunit protein uL23cz/uL23cy (rpl23-A).